The following is a 484-amino-acid chain: Trigger factor (484 aa).

The PPIase FKBP-type domain occupies 165 to 244 (GDFVQIDLTA…VQSVKERELP (80 aa)). A disordered region spans residues 429-484 (DAVSEEPADADAEAVVADAPAEEAAEAPAAEEAPAEKPKKKAPAKKKASEKAADSE). Acidic residues predominate over residues 430–440 (AVSEEPADADA). The segment covering 475–484 (KASEKAADSE) has biased composition (basic and acidic residues).

The protein belongs to the FKBP-type PPIase family. Tig subfamily.

It is found in the cytoplasm. The enzyme catalyses [protein]-peptidylproline (omega=180) = [protein]-peptidylproline (omega=0). Involved in protein export. Acts as a chaperone by maintaining the newly synthesized protein in an open conformation. Functions as a peptidyl-prolyl cis-trans isomerase. This Clavibacter michiganensis subsp. michiganensis (strain NCPPB 382) protein is Trigger factor.